Reading from the N-terminus, the 124-residue chain is Fluoride-specific ion channel FluC (124 aa).

The next 4 helical transmembrane spans lie at 6-26 (FAVA…ATWV), 34-54 (FYLA…YLYA), 69-89 (ALII…LDAL), and 101-121 (FAYV…GLAL). Na(+)-binding residues include Gly76 and Thr79.

Belongs to the fluoride channel Fluc/FEX (TC 1.A.43) family.

Its subcellular location is the cell inner membrane. The enzyme catalyses fluoride(in) = fluoride(out). Na(+) is not transported, but it plays an essential structural role and its presence is essential for fluoride channel function. In terms of biological role, fluoride-specific ion channel. Important for reducing fluoride concentration in the cell, thus reducing its toxicity. The sequence is that of Fluoride-specific ion channel FluC from Stutzerimonas stutzeri (strain A1501) (Pseudomonas stutzeri).